Reading from the N-terminus, the 353-residue chain is DNA integrity scanning protein DisA (353 aa).

Residues 6–144 (DKELMNILKI…GGIKYVLRDS (139 aa)) form the DAC domain. Residues glycine 73, leucine 91, and 104-108 (TRHRT) contribute to the ATP site.

This sequence belongs to the DisA family. Homooctamer. The cofactor is Mg(2+).

The enzyme catalyses 2 ATP = 3',3'-c-di-AMP + 2 diphosphate. Participates in a DNA-damage check-point that is active prior to asymmetric division when DNA is damaged. DisA forms globular foci that rapidly scan along the chromosomes during sporulation, searching for lesions. When a lesion is present, DisA pauses at the lesion site. This triggers a cellular response that culminates in a temporary block in sporulation initiation. In terms of biological role, also has diadenylate cyclase activity, catalyzing the condensation of 2 ATP molecules into cyclic di-AMP (c-di-AMP). c-di-AMP acts as a signaling molecule that couples DNA integrity with progression of sporulation. The rise in c-di-AMP level generated by DisA while scanning the chromosome, operates as a positive signal that advances sporulation; upon encountering a lesion, the DisA focus arrests at the damaged site and halts c-di-AMP synthesis. The sequence is that of DNA integrity scanning protein DisA from Clostridium botulinum (strain Okra / Type B1).